A 221-amino-acid chain; its full sequence is Type 3 secretion system stator protein (221 aa).

This sequence belongs to the SctL stator family. The core secretion machinery of the T3SS is composed of approximately 20 different proteins, including cytoplasmic components, a base, an export apparatus and a needle. This subunit is part of the cytosolic complex. Interacts directly with YscN/SctN (T3SS ATPase) and YscQ/SctQ (the major sorting platform component).

The protein resides in the cytoplasm. Functionally, component of the type III secretion system (T3SS), also called injectisome, which is used to inject bacterial effector proteins into eukaryotic host cells. Acts as a regulator of the YscN/SctN ATPase activity. This Yersinia pestis protein is Type 3 secretion system stator protein.